Consider the following 258-residue polypeptide: Hemin import ATP-binding protein HmuV (258 aa).

One can recognise an ABC transporter domain in the interval 1-238 (MLDIDVSNLS…DILERTYRTP (238 aa)). Residue 34-41 (GENGAGKS) participates in ATP binding.

It belongs to the ABC transporter superfamily. Heme (hemin) importer (TC 3.A.1.14.5) family. In terms of assembly, the complex is composed of two ATP-binding proteins (HmuV), two transmembrane proteins (HmuU) and a solute-binding protein (HmuT).

It localises to the cell inner membrane. Functionally, part of the ABC transporter complex HmuTUV involved in hemin import. Responsible for energy coupling to the transport system. This is Hemin import ATP-binding protein HmuV from Idiomarina loihiensis (strain ATCC BAA-735 / DSM 15497 / L2-TR).